We begin with the raw amino-acid sequence, 275 residues long: uncharacterized protein (275 aa).

Belongs to the SMP-30/CGR1 family.

This is an uncharacterized protein from Sulfolobus acidocaldarius (strain ATCC 33909 / DSM 639 / JCM 8929 / NBRC 15157 / NCIMB 11770).